A 1014-amino-acid polypeptide reads, in one-letter code: Probable sucrose-phosphate synthase 5 (1014 aa).

Composition is skewed to basic and acidic residues over residues R29 to A41 and E49 to T58. Disordered stretches follow at residues R29–E108 and Q648–P677.

The protein belongs to the glycosyltransferase 1 family. In terms of assembly, homodimer or homotetramer. As to expression, expressed in germinating seeds.

It catalyses the reaction beta-D-fructose 6-phosphate + UDP-alpha-D-glucose = sucrose 6(F)-phosphate + UDP + H(+). Its pathway is glycan biosynthesis; sucrose biosynthesis; sucrose from D-fructose 6-phosphate and UDP-alpha-D-glucose: step 1/2. Activity is regulated by phosphorylation and moderated by concentration of metabolites and light. Functionally, plays a role in photosynthetic sucrose synthesis by catalyzing the rate-limiting step of sucrose biosynthesis from UDP-glucose and fructose- 6-phosphate. Involved in the regulation of carbon partitioning in the leaves of plants. May regulate the synthesis of sucrose and therefore play a major role as a limiting factor in the export of photoassimilates out of the leaf. Plays a role for sucrose availability that is essential for plant growth and fiber elongation. In Oryza sativa subsp. japonica (Rice), this protein is Probable sucrose-phosphate synthase 5 (SPS5).